Reading from the N-terminus, the 196-residue chain is Small ribosomal subunit protein uS4c (196 aa).

The segment at 15 to 43 (LGALPGLTRKTPKSGSNQKKKFHSGKKEQ) is disordered. An S4 RNA-binding domain is found at 89–150 (MRLDNILFRL…NQRSKRLVQN (62 aa)).

Belongs to the universal ribosomal protein uS4 family. As to quaternary structure, part of the 30S ribosomal subunit. Contacts protein S5. The interaction surface between S4 and S5 is involved in control of translational fidelity.

The protein resides in the plastid. It localises to the chloroplast. One of the primary rRNA binding proteins, it binds directly to 16S rRNA where it nucleates assembly of the body of the 30S subunit. Functionally, with S5 and S12 plays an important role in translational accuracy. In Melinis repens (Red Natal grass), this protein is Small ribosomal subunit protein uS4c (rps4).